The primary structure comprises 121 residues: Large ribosomal subunit protein eL18 (121 aa).

The protein belongs to the eukaryotic ribosomal protein eL18 family.

This is Large ribosomal subunit protein eL18 from Methanoregula boonei (strain DSM 21154 / JCM 14090 / 6A8).